The primary structure comprises 1017 residues: Rho-GTPase-activating protein LRG1 (1017 aa).

M1 carries the N-acetylmethionine modification. LIM zinc-binding domains are found at residues 28-88 (CARC…LCQY) and 98-148 (CHVC…CKYH). An LIM zinc-binding 3; truncated domain is found at 155-184 (KRCKGCEFPISDQYIEFPKGEEIHCWHPEC). Residues 419 to 474 (CAGCNKYIQEECIQFYEHRWHIACFTCSSCHKNINPRSLTDPTFNKEKKKILCSHC) enclose the LIM zinc-binding 4 domain. The residue at position 562 (S562) is a Phosphoserine. A disordered region spans residues 570–602 (TDLNDPTKQGDSKNLVIQTDDPSSSQQVSTREN). Over residues 584 to 602 (LVIQTDDPSSSQQVSTREN) the composition is skewed to polar residues. The Rho-GAP domain maps to 730 to 953 (APLDVLCEKW…YLITHNEEMA (224 aa)).

Interacts with CDC42, RHO1 and RHO2.

It localises to the cytoplasm. The protein localises to the bud. It is found in the bud neck. Functionally, acts in signal transduction. Activates CDC42, RHO1 and RHO2. Negatively regulates 1,3-beta-glucan synthesis. May be responsible for the down-regulation of CDC42 during mating. The protein is Rho-GTPase-activating protein LRG1 (LRG1) of Saccharomyces cerevisiae (strain ATCC 204508 / S288c) (Baker's yeast).